The following is a 446-amino-acid chain: Probable D-serine dehydratase (446 aa).

Position 113 is an N6-(pyridoxal phosphate)lysine (K113).

Belongs to the serine/threonine dehydratase family. DsdA subfamily. Pyridoxal 5'-phosphate is required as a cofactor.

It carries out the reaction D-serine = pyruvate + NH4(+). The chain is Probable D-serine dehydratase from Burkholderia lata (strain ATCC 17760 / DSM 23089 / LMG 22485 / NCIMB 9086 / R18194 / 383).